Reading from the N-terminus, the 218-residue chain is Capsid protein (218 aa).

Met-1 carries the N-acetylmethionine; by host modification. The segment covering 1–10 (MDKSESTSAG) has biased composition (low complexity). The disordered stretch occupies residues 1 to 30 (MDKSESTSAGRNRRRRPRRGSRSASSSADA). The segment covering 11 to 21 (RNRRRRPRRGS) has biased composition (basic residues).

The protein belongs to the cucumovirus capsid protein family.

It localises to the virion. In terms of biological role, capsid protein. Probably binds RNA and plays a role in packaging. In Cucumber mosaic virus (strain P6) (CMV), this protein is Capsid protein.